The primary structure comprises 200 residues: A-type ATP synthase subunit E 3 (200 aa).

Belongs to the V-ATPase E subunit family. As to quaternary structure, has multiple subunits with at least A(3), B(3), C, D, E, F, H, I and proteolipid K(x).

The protein localises to the cell membrane. Component of the A-type ATP synthase that produces ATP from ADP in the presence of a proton gradient across the membrane. This Methanospirillum hungatei JF-1 (strain ATCC 27890 / DSM 864 / NBRC 100397 / JF-1) protein is A-type ATP synthase subunit E 3.